The chain runs to 366 residues: Phospho-N-acetylmuramoyl-pentapeptide-transferase (366 aa).

10 helical membrane passes run Ala-25–Asn-45, Gly-70–Trp-90, Leu-93–Phe-113, Leu-134–Ala-154, Phe-174–Gly-194, Gly-205–Ala-225, Leu-245–Pro-265, Ala-268–Val-288, Val-297–Phe-317, and Gln-343–Leu-363.

Belongs to the glycosyltransferase 4 family. MraY subfamily. The cofactor is Mg(2+).

It is found in the cell inner membrane. The enzyme catalyses UDP-N-acetyl-alpha-D-muramoyl-L-alanyl-gamma-D-glutamyl-meso-2,6-diaminopimeloyl-D-alanyl-D-alanine + di-trans,octa-cis-undecaprenyl phosphate = di-trans,octa-cis-undecaprenyl diphospho-N-acetyl-alpha-D-muramoyl-L-alanyl-D-glutamyl-meso-2,6-diaminopimeloyl-D-alanyl-D-alanine + UMP. Its pathway is cell wall biogenesis; peptidoglycan biosynthesis. In terms of biological role, catalyzes the initial step of the lipid cycle reactions in the biosynthesis of the cell wall peptidoglycan: transfers peptidoglycan precursor phospho-MurNAc-pentapeptide from UDP-MurNAc-pentapeptide onto the lipid carrier undecaprenyl phosphate, yielding undecaprenyl-pyrophosphoryl-MurNAc-pentapeptide, known as lipid I. The protein is Phospho-N-acetylmuramoyl-pentapeptide-transferase of Agrobacterium fabrum (strain C58 / ATCC 33970) (Agrobacterium tumefaciens (strain C58)).